We begin with the raw amino-acid sequence, 340 residues long: Protein-glutamate methylesterase/protein-glutamine glutaminase 1 (340 aa).

Positions 5-122 constitute a Response regulatory domain; the sequence is KLFIVDDSAL…KVVSELKEKI (118 aa). A 4-aspartylphosphate modification is found at D56. Positions 148–340 constitute a CheB-type methylesterase domain; it reads GKNGRQLVVI…AIAEEIAANI (193 aa). Residues S160, H187, and D285 contribute to the active site.

The protein belongs to the CheB family. In terms of processing, phosphorylated by CheA. Phosphorylation of the N-terminal regulatory domain activates the methylesterase activity.

The protein localises to the cytoplasm. The catalysed reaction is [protein]-L-glutamate 5-O-methyl ester + H2O = L-glutamyl-[protein] + methanol + H(+). It carries out the reaction L-glutaminyl-[protein] + H2O = L-glutamyl-[protein] + NH4(+). Its function is as follows. Involved in chemotaxis. Part of a chemotaxis signal transduction system that modulates chemotaxis in response to various stimuli. Catalyzes the demethylation of specific methylglutamate residues introduced into the chemoreceptors (methyl-accepting chemotaxis proteins or MCP) by CheR. Also mediates the irreversible deamidation of specific glutamine residues to glutamic acid. This chain is Protein-glutamate methylesterase/protein-glutamine glutaminase 1, found in Carboxydothermus hydrogenoformans (strain ATCC BAA-161 / DSM 6008 / Z-2901).